Consider the following 395-residue polypeptide: MAELHLSFPAYSLCWINNHQMAVGGGGGTTKSGVKNKLKLLSYEDYEPEVGEGHTKFIEHGEIELKHSDDAVMSLGYFKNELIAGINNTIDGKLIDHLRLYGRKDKLFEEKNALRLTDFDNDEQYQRLCLFEPLHDAICISCTNKSFFIISKNDHKVLFEKHGSDVYDVSSTEDKLAIAVDDRVEIYDWNTFELVQVLYMPVERATVRGVSFLPNQSIVAAYNYIKDSKRFASLVRFDYSSKNQLWRFGMIRDLKNAKGVTCFCCDKENGMIIVAGADCSIRFMSLDLTKLSQVYKHSLPVTDMQLSPDSEALVSVSADGLLCLQFVGKFKNLSAVKLEDAGVILRLSLMFPFVLAILYFYLQLLFPDEKLDAIHRFFSFILHIFSKYTIRNYDL.

Residues 1 to 346 (MAELHLSFPA…KLEDAGVILR (346 aa)) are Cytoplasmic-facing. WD repeat units lie at residues 250 to 285 (MIRD…RFMS) and 290 to 326 (KLSQ…CLQF). Residues 347-367 (LSLMFPFVLAILYFYLQLLFP) form a helical; Signal-anchor for type II membrane protein membrane-spanning segment. Residues 368–395 (DEKLDAIHRFFSFILHIFSKYTIRNYDL) are Lumenal-facing.

The protein resides in the endoplasmic reticulum membrane. It is found in the golgi apparatus. Its subcellular location is the cis-Golgi network membrane. In terms of biological role, required for the formation of transport vesicles from the ER. This function involves the cytoplasmic domain of the protein, which is thought to interact with the small GTP-binding protein sar1. This is Membrane glycoprotein spo14 (spo14) from Schizosaccharomyces pombe (strain 972 / ATCC 24843) (Fission yeast).